The sequence spans 161 residues: Cuticle protein 16.8 (161 aa).

Q1 is modified (pyrrolidone carboxylic acid). The span at 1-10 shows a compositional bias: pro residues; that stretch reads QSEPAGPPQP. Disordered stretches follow at residues 1-44 and 67-103; these read QSEP…YSYT and ETNE…PAKP. The Chitin-binding type R&amp;R domain maps to 8–74; sequence PQPYTFSYDN…TVETNEPGTK (67 aa). Over residues 67-86 the composition is skewed to polar residues; it reads ETNEPGTKTSNPADAQIVSN. The span at 87-103 shows a compositional bias: low complexity; sequence AATDSYSPSPASSPAKP.

Functionally, component of the cuticle of the tick. Binds chitin. This Ixodes ricinus (Common tick) protein is Cuticle protein 16.8.